The chain runs to 371 residues: GPI mannosyltransferase 1 (371 aa).

Transmembrane regions (helical) follow at residues 64–84, 120–140, 144–164, 190–210, 248–268, 290–310, 318–338, and 344–364; these read FPSW…WLMI, AILG…SVWL, ILGF…AFLV, IVVG…YLYG, ASSL…PLVF, VCTS…LPNS, LICL…AYNL, and SVFI…VYEL.

This sequence belongs to the PIGM family.

The protein resides in the endoplasmic reticulum membrane. It participates in glycolipid biosynthesis; glycosylphosphatidylinositol-anchor biosynthesis. In terms of biological role, mannosyltransferase involved in glycosylphosphatidylinositol-anchor biosynthesis. Transfers the first alpha-1,4-mannose to GlcN-acyl-PI during GPI precursor assembly. Required for cell wall integrity. This chain is GPI mannosyltransferase 1 (gpi14), found in Schizosaccharomyces pombe (strain 972 / ATCC 24843) (Fission yeast).